Reading from the N-terminus, the 283-residue chain is Biotin synthase (283 aa).

One can recognise a Radical SAM core domain in the interval 3-232 (KISNEIFLCS…NTRLMIAGGR (230 aa)). [4Fe-4S] cluster is bound by residues Cys21, Cys25, and Cys28. Residues Cys65, Cys100, and Arg225 each coordinate [2Fe-2S] cluster.

Belongs to the radical SAM superfamily. Biotin synthase family. In terms of assembly, homodimer. The cofactor is [4Fe-4S] cluster. [2Fe-2S] cluster serves as cofactor.

The catalysed reaction is (4R,5S)-dethiobiotin + (sulfur carrier)-SH + 2 reduced [2Fe-2S]-[ferredoxin] + 2 S-adenosyl-L-methionine = (sulfur carrier)-H + biotin + 2 5'-deoxyadenosine + 2 L-methionine + 2 oxidized [2Fe-2S]-[ferredoxin]. It participates in cofactor biosynthesis; biotin biosynthesis; biotin from 7,8-diaminononanoate: step 2/2. Its function is as follows. Catalyzes the conversion of dethiobiotin (DTB) to biotin by the insertion of a sulfur atom into dethiobiotin via a radical-based mechanism. This Helicobacter hepaticus (strain ATCC 51449 / 3B1) protein is Biotin synthase.